The sequence spans 328 residues: Nucleotide-binding protein BLD_0430 (328 aa).

Residues 1–35 are disordered; sequence MNQQTTNRDTGEAAATNAPANSATSTSTPDNQPTP. A compositionally biased stretch (low complexity) spans 13-29; that stretch reads AAATNAPANSATSTSTP. 46 to 53 lines the ATP pocket; sequence GMSGAGRS. Residue 101–104 coordinates GTP; that stretch reads DVRS.

This sequence belongs to the RapZ-like family.

In terms of biological role, displays ATPase and GTPase activities. This is Nucleotide-binding protein BLD_0430 from Bifidobacterium longum (strain DJO10A).